Consider the following 504-residue polypeptide: Maturase K (504 aa).

The protein belongs to the intron maturase 2 family. MatK subfamily.

The protein resides in the plastid. The protein localises to the chloroplast. Usually encoded in the trnK tRNA gene intron. Probably assists in splicing its own and other chloroplast group II introns. The sequence is that of Maturase K from Chimaphila umbellata (Pipsissewa).